The chain runs to 115 residues: uncharacterized protein (115 aa).

The segment at M1–P115 is disordered. Residues L7–S17 are compositionally biased toward polar residues. 2 stretches are compositionally biased toward low complexity: residues A60–R70 and S91–R107.

This is an uncharacterized protein from Human adenovirus C serotype 2 (HAdV-2).